A 1712-amino-acid polypeptide reads, in one-letter code: U3 small nucleolar RNA-associated protein 10 (1712 aa).

HEAT repeat units follow at residues glutamate 164–glutamate 202, threonine 490–serine 528, threonine 564–glycine 605, threonine 987–histidine 1025, valine 1236–lysine 1275, glutamate 1605–alanine 1646, and leucine 1667–glutamate 1705.

Belongs to the HEATR1/UTP10 family. Component of the ribosomal small subunit (SSU) processome.

The protein localises to the nucleus. It localises to the nucleolus. In terms of biological role, involved in nucleolar processing of pre-18S ribosomal RNA. Involved in ribosome biosynthesis. The chain is U3 small nucleolar RNA-associated protein 10 from Phaeosphaeria nodorum (strain SN15 / ATCC MYA-4574 / FGSC 10173) (Glume blotch fungus).